The following is a 230-amino-acid chain: Thymidylate synthase 1 (230 aa).

DUMP is bound at residue R92–R93. The active-site Nucleophile is C112. Residues R132 to D135, N143, and H173 to Y175 contribute to the dUMP site. D135 is a (6R)-5,10-methylene-5,6,7,8-tetrahydrofolate binding site.

It belongs to the thymidylate synthase family. Bacterial-type ThyA subfamily. In terms of assembly, homodimer.

Its subcellular location is the cytoplasm. It carries out the reaction dUMP + (6R)-5,10-methylene-5,6,7,8-tetrahydrofolate = 7,8-dihydrofolate + dTMP. Its pathway is pyrimidine metabolism; dTTP biosynthesis. Functionally, catalyzes the reductive methylation of 2'-deoxyuridine-5'-monophosphate (dUMP) to 2'-deoxythymidine-5'-monophosphate (dTMP) while utilizing 5,10-methylenetetrahydrofolate (mTHF) as the methyl donor and reductant in the reaction, yielding dihydrofolate (DHF) as a by-product. This enzymatic reaction provides an intracellular de novo source of dTMP, an essential precursor for DNA biosynthesis. The chain is Thymidylate synthase 1 from Bacillus amyloliquefaciens (Bacillus velezensis).